The primary structure comprises 429 residues: Guanine nucleotide-binding protein subunit alpha (429 aa).

A lipid anchor (N-myristoyl glycine) is attached at G2. C3 carries the S-palmitoyl cysteine lipid modification. In terms of domain architecture, G-alpha spans 40-429 (KGVKLLLLGA…QQNLKKSGIM (390 aa)). Residues 43–56 (KLLLLGAGESGKST) are G1 motif. GTP contacts are provided by E51, S52, G53, K54, S55, and T56. Residue S55 coordinates Mg(2+). The tract at residues 125 to 197 (LKQIDADVAG…KDSEQFTRLS (73 aa)) is not present in other G-proteins. The segment at 249 to 257 (DILKGRIKT) is G2 motif. Residues L251, T257, G279, N345, K346, D348, and A401 each contribute to the GTP site. Residue T257 participates in Mg(2+) binding. A G3 motif region spans residues 272–281 (FKVLDAGGQR). The segment at 341–348 (ILFLNKID) is G4 motif. A G5 motif region spans residues 399-404 (TCATDS).

The protein belongs to the G-alpha family. G(q) subfamily. G proteins are composed of 3 units; alpha, beta and gamma. The alpha chain contains the guanine nucleotide binding site. It depends on Mg(2+) as a cofactor.

In terms of biological role, guanine nucleotide-binding proteins (G proteins) are involved as modulators or transducers in various transmembrane signaling systems. Involved in the mating pathway. This is Guanine nucleotide-binding protein subunit alpha (CAG1) from Candida albicans (strain WO-1) (Yeast).